A 554-amino-acid polypeptide reads, in one-letter code: Tetratricopeptide repeat protein 34 (554 aa).

TPR repeat units follow at residues 38 to 71 (ETSC…RPQA), 166 to 199 (SESL…EPGN), 200 to 233 (VKAL…DPGT), 294 to 327 (PSWR…TPSS), 328 to 361 (EAAQ…DTQD), 411 to 445 (NPYH…PAED), 452 to 485 (SEDF…APAQ), and 500 to 533 (ASVF…DPSH).

This chain is Tetratricopeptide repeat protein 34 (Ttc34), found in Mus musculus (Mouse).